The primary structure comprises 164 residues: Transcription elongation factor GreA (164 aa).

Belongs to the GreA/GreB family.

Functionally, necessary for efficient RNA polymerase transcription elongation past template-encoded arresting sites. The arresting sites in DNA have the property of trapping a certain fraction of elongating RNA polymerases that pass through, resulting in locked ternary complexes. Cleavage of the nascent transcript by cleavage factors such as GreA or GreB allows the resumption of elongation from the new 3'terminus. GreA releases sequences of 2 to 3 nucleotides. This chain is Transcription elongation factor GreA, found in Helicobacter acinonychis (strain Sheeba).